The primary structure comprises 819 residues: MKYDFKNVEKFYQNKWDFSVSKDSKKKKCYVLEMFPYPSGKIHMGHLRNYAIGDVIARYKRARGFEVLHPIGWDAFGLPAENAARDNNINPAAWTQDNIDNMRTQLKSIGLSYNWDRELSTCEPDYYKHEQKFFLDFLKHGLAYRKESWVNWDPVDQTVLANEQVVDGKGWRSGAVVEKRKLFQWFLKITDFAEDLLHCLQSLKNWPEKVKTMQERWIGKSEGATIDFEIFGLNKKLKIFTTSPHTLFGASFLAVGAEHPIVQDLKDKEIRDFIGNMKAKGENDEKIGIYTGLNVKHPFLDKELPLYIANFVLMEYGEGAIFGCPAHDQRDFEFAQKYGLPIIPVVCEESTEILKEPYFGDGVMFNSEFLNGLMINEAKKVIIKKLEEKGIGKKTINYRLHDWGISRQRYWGCPIPIIHCKDCGIVPVPEKDLPVVLPTDVEFTSGGNPLDKHPTWKFVDCPKCGKQAERETDTFDTFFESSWYFAAFCSENKSINKDTCNRFMPVDYYIGGIEHAILHLLYSRFFCRALTKCGYFDVKEPFSTLITQGMVCHITYKDENGKWLFPEEAKELIAKGAKIQVGKVEKMSKSKKNTVDPNFIIEKYGADTARLFVLSDTPPEKDMEWSDDGVEGCFRYINKLWRMVVQLRTVNIHYDNENIVGKLLEYRKKIHKLLHGLTDDLENCRLNCVVAKFREMTNLIAEIDVKTGKSLIDEGICILIRVIEPLMPHLAENLWQEIGGEGMLYMQPWPKADESLLIDNMVTVAVQINGKLRATIKVETDLPQEELKKIATDSVSNKIDQSKIRTIYAVPNKVVNIVI.

The short motif at 36–46 (PYPSGKIHMGH) is the 'HIGH' region element. Residues 586 to 590 (KMSKS) carry the 'KMSKS' region motif. An ATP-binding site is contributed by K589.

The protein belongs to the class-I aminoacyl-tRNA synthetase family.

The protein resides in the cytoplasm. It catalyses the reaction tRNA(Leu) + L-leucine + ATP = L-leucyl-tRNA(Leu) + AMP + diphosphate. The chain is Leucine--tRNA ligase from Wolbachia pipientis subsp. Culex pipiens (strain wPip).